The following is a 1036-amino-acid chain: Isoleucine--tRNA ligase (1036 aa).

Positions 46–56 (PFATGLPHYGH) match the 'HIGH' region motif. The short motif at 589-593 (KMSKR) is the 'KMSKS' region element. Lys-592 is a binding site for ATP.

This sequence belongs to the class-I aminoacyl-tRNA synthetase family. IleS type 2 subfamily. In terms of assembly, monomer. Requires Zn(2+) as cofactor.

It localises to the cytoplasm. It catalyses the reaction tRNA(Ile) + L-isoleucine + ATP = L-isoleucyl-tRNA(Ile) + AMP + diphosphate. Its function is as follows. Catalyzes the attachment of isoleucine to tRNA(Ile). As IleRS can inadvertently accommodate and process structurally similar amino acids such as valine, to avoid such errors it has two additional distinct tRNA(Ile)-dependent editing activities. One activity is designated as 'pretransfer' editing and involves the hydrolysis of activated Val-AMP. The other activity is designated 'posttransfer' editing and involves deacylation of mischarged Val-tRNA(Ile). This is Isoleucine--tRNA ligase from Chlamydia muridarum (strain MoPn / Nigg).